The following is a 122-amino-acid chain: Holo-[acyl-carrier-protein] synthase (122 aa).

2 residues coordinate Mg(2+): D9 and E58.

The protein belongs to the P-Pant transferase superfamily. AcpS family. It depends on Mg(2+) as a cofactor.

The protein resides in the cytoplasm. It carries out the reaction apo-[ACP] + CoA = holo-[ACP] + adenosine 3',5'-bisphosphate + H(+). Its function is as follows. Transfers the 4'-phosphopantetheine moiety from coenzyme A to a Ser of acyl-carrier-protein. This chain is Holo-[acyl-carrier-protein] synthase, found in Chlamydia felis (strain Fe/C-56) (Chlamydophila felis).